A 95-amino-acid polypeptide reads, in one-letter code: Aspartyl/glutamyl-tRNA(Asn/Gln) amidotransferase subunit C (95 aa).

It belongs to the GatC family. As to quaternary structure, heterotrimer of A, B and C subunits.

The catalysed reaction is L-glutamyl-tRNA(Gln) + L-glutamine + ATP + H2O = L-glutaminyl-tRNA(Gln) + L-glutamate + ADP + phosphate + H(+). It catalyses the reaction L-aspartyl-tRNA(Asn) + L-glutamine + ATP + H2O = L-asparaginyl-tRNA(Asn) + L-glutamate + ADP + phosphate + 2 H(+). Functionally, allows the formation of correctly charged Asn-tRNA(Asn) or Gln-tRNA(Gln) through the transamidation of misacylated Asp-tRNA(Asn) or Glu-tRNA(Gln) in organisms which lack either or both of asparaginyl-tRNA or glutaminyl-tRNA synthetases. The reaction takes place in the presence of glutamine and ATP through an activated phospho-Asp-tRNA(Asn) or phospho-Glu-tRNA(Gln). The sequence is that of Aspartyl/glutamyl-tRNA(Asn/Gln) amidotransferase subunit C from Brucella abortus (strain S19).